A 792-amino-acid chain; its full sequence is Vicilin Car i 2.0101 (792 aa).

An N-terminal signal peptide occupies residues 1–26 (MVTKAKIPLFLFLSALFLALVCSSLA). 5 disordered regions span residues 132–153 (ERRE…DPRE), 182–217 (RFEE…YRQC), 240–272 (ERLE…EQRY), 302–325 (EERE…CQRR), and 350–394 (QQGR…ESGE). 2 stretches are compositionally biased toward basic and acidic residues: residues 182-200 (RFEE…RGRD) and 207-217 (PRDPREQYRQC). The span at 302-314 (EERERQRGRDRQD) shows a compositional bias: basic and acidic residues. Over residues 315–325 (PQQQYHRCQRR) the composition is skewed to low complexity. Over residues 350–375 (QQGREWGPDQASPRRESRGREEEQQR) the composition is skewed to basic and acidic residues. A Cu cation-binding site is contributed by Tyr379. 2 consecutive Cupin type-1 domains span residues 384-537 (QGLR…DRLE) and 582-754 (ISLK…EEIE). Cu cation is bound by residues Cys652, His654, and His698. Residues 727-754 (LAGQNNIINQLEREAKELSFNMPREEIE) are a coiled coil.

It belongs to the 7S seed storage protein family. In terms of assembly, homotrimer. As to expression, expressed in seed (at protein level). Expressed in seed.

Functionally, seed storage protein. This is Vicilin Car i 2.0101 from Carya illinoinensis (Pecan).